A 311-amino-acid chain; its full sequence is Olfactory receptor 2M4 (311 aa).

The Extracellular portion of the chain corresponds to 1 to 25 (MVWENQTFNSIFILLGIFNHSPTHT). The N-linked (GlcNAc...) asparagine glycan is linked to asparagine 5. The chain crosses the membrane as a helical span at residues 26-49 (FLFSLVLGIFSLALMENISMVLLI). Residues 50–57 (YIEKQLHT) are Cytoplasmic-facing. The chain crosses the membrane as a helical span at residues 58-79 (PMYFLLSQLSLMDLMLICTTLP). At 80 to 100 (KMIFSYLSGKKSISLAGCGTQ) the chain is on the extracellular side. Cysteines 97 and 189 form a disulfide. The helical transmembrane segment at 101 to 120 (IFFYVSLLGAECFLLAVMAY) threads the bilayer. Over 121–139 (DRYVAICHPLQYTILMNPK) the chain is Cytoplasmic. A helical membrane pass occupies residues 140–158 (LCVFMTVASWTLGSLDGII). Topologically, residues 159 to 195 (VLAAVLSFSYCSSLEIHHFFCDVAALLPLSCTETSAF) are extracellular. Residues 196–219 (ERLLVICCVVMLIFPVSVIILSYS) form a helical membrane-spanning segment. Over 220 to 236 (HVLRAVIHMGSGESRRK) the chain is Cytoplasmic. Residues 237–259 (AFTTCSSHLSVVGLYYGAAMFMY) form a helical membrane-spanning segment. Residues 260–272 (MRPASKHTPDQDK) lie on the Extracellular side of the membrane. A helical membrane pass occupies residues 273 to 292 (MVSAFYTILTPMLNPLIYSL). The Cytoplasmic segment spans residues 293–311 (RNKEVFRALQKVLKKRKLI).

Belongs to the G-protein coupled receptor 1 family.

Its subcellular location is the cell membrane. Odorant receptor. The polypeptide is Olfactory receptor 2M4 (OR2M4) (Homo sapiens (Human)).